Reading from the N-terminus, the 283-residue chain is RuBisCO-associated protein (283 aa).

In terms of domain architecture, GH18 spans 5 to 283; the sequence is FKVFREFTSD…PEILLLAASK (279 aa). Catalysis depends on E128, which acts as the Proton donor.

This sequence belongs to the glycosyl hydrolase 18 family. Forms part of the RuBisCO complex. Leaves.

In Glycine max (Soybean), this protein is RuBisCO-associated protein.